We begin with the raw amino-acid sequence, 744 residues long: C-type polyheme cytochrome OmcB (744 aa).

The signal sequence occupies residues Met-1–Gly-23. Cys-24 carries the N-palmitoyl cysteine lipid modification. Cys-24 carries the S-diacylglycerol cysteine lipid modification. Heme c is bound by residues Cys-48, Cys-51, His-52, Cys-81, Cys-84, His-85, Cys-107, Cys-110, His-111, Cys-141, Cys-144, His-145, Cys-185, Cys-188, His-189, Cys-225, Cys-228, His-229, Cys-303, Cys-306, His-307, Cys-382, Cys-385, His-386, Cys-430, Cys-433, His-434, Cys-480, Cys-483, His-484, Cys-555, Cys-558, His-559, Cys-587, Cys-590, and His-591.

In terms of processing, binds 12 heme c groups per subunit.

It is found in the cell outer membrane. Involved in anaerobic respiration with Fe(3+) as terminal electron acceptor. Acts as an electron-transport mediator in the dissimilatory reduction of Fe(3+). The chain is C-type polyheme cytochrome OmcB (omcB) from Geobacter sulfurreducens (strain DL-1 / KN400).